Reading from the N-terminus, the 729-residue chain is Adenosylcobalamin-dependent ribonucleoside-triphosphate reductase (729 aa).

Cys189 and Cys438 are disulfide-bonded. Active-site residues include Cys427 and Glu429.

It belongs to the class II ribonucleoside-triphosphate reductase family. As to quaternary structure, monomer. Adenosylcob(III)alamin serves as cofactor.

The enzyme catalyses a 2'-deoxyribonucleoside 5'-triphosphate + [thioredoxin]-disulfide + H2O = a ribonucleoside 5'-triphosphate + [thioredoxin]-dithiol. The polypeptide is Adenosylcobalamin-dependent ribonucleoside-triphosphate reductase (rnr) (Euglena gracilis).